Here is a 260-residue protein sequence, read N- to C-terminus: Major prion protein (260 aa).

A signal peptide spans 1–22; the sequence is MANLGCWMLVLFVATWSDLGLC. The segment at 23–237 is interaction with GRB2, ERI3 and SYN1; it reads KKRPKPGGWN…ESQAYYQRGS (215 aa). The tract at residues 26 to 112 is disordered; sequence PKPGGWNTGG…HNQWNKPSKP (87 aa). A run of 6 repeats spans residues 51–58, 59–66, 67–74, 75–82, 83–90, and 91–98. Positions 51–98 are 6 X 8 AA tandem repeats of P-H-G-G-G-W-G-Q; sequence PQGGGWGQPHGGGWGQPHGGGWGQPHGGGWGQPHGGGWGQPHGGGWGQ. Residues 52–102 show a composition bias toward gly residues; it reads QGGGWGQPHGGGWGQPHGGGWGQPHGGGWGQPHGGGWGQPHGGGWGQGGGT. Cu(2+)-binding residues include His-68, Gly-69, Gly-70, His-76, Gly-77, Gly-78, His-84, Gly-85, Gly-86, His-92, Gly-93, and Gly-94. The cysteines at positions 186 and 221 are disulfide-linked. N-linked (GlcNAc...) asparagine glycans are attached at residues Asn-188 and Asn-204. The GPI-anchor amidated serine moiety is linked to residue Ser-237. Residues 238–260 constitute a propeptide, removed in mature form; that stretch reads SMVLFSSPPVILLISFLIFLIVG.

The protein belongs to the prion family. As to quaternary structure, monomer and homodimer. Has a tendency to aggregate into amyloid fibrils containing a cross-beta spine, formed by a steric zipper of superposed beta-strands. Soluble oligomers may represent an intermediate stage on the path to fibril formation. Copper binding may promote oligomerization. Interacts with GRB2, APP, ERI3/PRNPIP and SYN1. Mislocalized cytosolically exposed PrP interacts with MGRN1; this interaction alters MGRN1 subcellular location and causes lysosomal enlargement. Interacts with KIAA1191.

The protein localises to the cell membrane. It is found in the golgi apparatus. In terms of biological role, its primary physiological function is unclear. Has cytoprotective activity against internal or environmental stresses. May play a role in neuronal development and synaptic plasticity. May be required for neuronal myelin sheath maintenance. May play a role in iron uptake and iron homeostasis. Soluble oligomers are toxic to cultured neuroblastoma cells and induce apoptosis (in vitro). Association with GPC1 (via its heparan sulfate chains) targets PRNP to lipid rafts. Also provides Cu(2+) or Zn(2+) for the ascorbate-mediated GPC1 deaminase degradation of its heparan sulfate side chains. The chain is Major prion protein (PRNP) from Saimiri sciureus (Common squirrel monkey).